A 779-amino-acid polypeptide reads, in one-letter code: MSRFPAVAGRAPRRQEEGERSRDLQEERLSAVCIADREEKGCTSQEGGTTPTFPIQKQRKKIIQAVRDNSFLIVTGNTGSGKTTQLPKYLYEAGFSQHGMIGVTQPRKVAAISVAQRVAEEMKCTLGSKVGYQVRFDDCSSKETAIKYMTDGCLLKHILGDPNLTKFSVIILDEAHERTLTTDILFGLLKKLFQEKSPNRKEHLKVVVMSATMELAKLSAFFGNCPIFDIPGRLYPVREKFCNLIGPRDRENTAYIQAIVKVTMDIHLNEMAGDILVFLTGQFEIEKSCELLFQMAESVDYDYDVQDTTLDGLLILPCYGSMTTDQQRRIFLPPPPGIRKCVISTNISATSLTIDGIRYVVDGGFVKQLNHNPRLGLDILEVVPISKSEALQRSGRAGRTSSGKCFRIYSKDFWNQCMPDHVIPEIKRTSLTSVVLTLKCLAIHDVIRFPYLDPPNERLILEALKQLYQCDAIDRSGHVTRLGLSMVEFPLPPHLTCAVIKAASLDCEDLLLPIAAMLSVENVFIRPVDPEYQKEAEQRHRELAAKAGGFNDFATLAVIFEQCKSSGAPASWCQKHWIHWRCLFSAFRVEAQLRELIRKLKQQSDFPKETFEGPKHEVLRRCLCAGYFKNVARRSVGRTFCTMDGRGSPVHIHPSSALHEQETKLEWIIFHEVLVTTKVYARIVCPIRYEWVRDLLPKLHEFNAHDLSSVARREVREDARRRWTNKENVKQLKDGISKDVLKKMQRRNDDKSISDARARFLERKQQRTQDHSDTRKETG.

The disordered stretch occupies residues 1–28 (MSRFPAVAGRAPRRQEEGERSRDLQEER). Residues 13-28 (RRQEEGERSRDLQEER) are compositionally biased toward basic and acidic residues. The Helicase ATP-binding domain maps to 63–231 (IQAVRDNSFL…FGNCPIFDIP (169 aa)). ATP is bound at residue 76 to 83 (GNTGSGKT). A DEAH box motif is present at residues 173 to 176 (DEAH). The Helicase C-terminal domain maps to 263 to 442 (TMDIHLNEMA…SVVLTLKCLA (180 aa)). A disordered region spans residues 737–779 (SKDVLKKMQRRNDDKSISDARARFLERKQQRTQDHSDTRKETG).

It belongs to the DEAD box helicase family. DEAH subfamily. Ubiquitously expressed.

The enzyme catalyses ATP + H2O = ADP + phosphate + H(+). Functionally, probable ATP-dependent RNA helicase. The chain is Probable ATP-dependent RNA helicase DHX40 (DHX40) from Homo sapiens (Human).